We begin with the raw amino-acid sequence, 155 residues long: Aspartate carbamoyltransferase regulatory chain (155 aa).

Residues Cys113, Cys118, Cys139, and Cys142 each coordinate Zn(2+).

It belongs to the PyrI family. In terms of assembly, contains catalytic and regulatory chains. Zn(2+) serves as cofactor.

Involved in allosteric regulation of aspartate carbamoyltransferase. The chain is Aspartate carbamoyltransferase regulatory chain from Methanospirillum hungatei JF-1 (strain ATCC 27890 / DSM 864 / NBRC 100397 / JF-1).